Consider the following 110-residue polypeptide: UPF0060 membrane protein RPA3838 (110 aa).

The next 4 membrane-spanning stretches (helical) occupy residues 4 to 24 (LLTF…FWAW), 31 to 51 (PLWL…LTLA), 59 to 79 (AYAA…WAIE), and 85 to 105 (QWDV…LFGP).

Belongs to the UPF0060 family.

Its subcellular location is the cell inner membrane. The polypeptide is UPF0060 membrane protein RPA3838 (Rhodopseudomonas palustris (strain ATCC BAA-98 / CGA009)).